The following is a 1161-amino-acid chain: Type IV pilus biogenesis factor PilY1 (1161 aa).

A signal peptide spans 1–30; sequence MKSVLHQIGKTSLAAALSGAVLLSAQTTHA. Positions 598, 600, 602, and 606 each coordinate Ca(2+). Residues 617 to 619 form an integrin-binding motif RGD region; the sequence is RGD. Ca(2+) contacts are provided by D849, N851, D853, V855, and D857. The disordered stretch occupies residues 1136 to 1161; the sequence is SGECLTVNPGPNTRGRQNWRPIEGKN.

This sequence belongs to the PilY1 family. Interacts (via C-terminus) with host integrins alpha-V/beta-3 (ITGAV/ITGB3) and alpha-V/beta-5 (ITGAV/ITGB5).

The protein localises to the fimbrium. The protein resides in the membrane. It is found in the cytoplasm. It localises to the cytosol. In terms of biological role, involved in pilus assembly, twitching motility and adhesion to host cells. Primes type IV pili (T4P) assembly and is required for inclusion of minor pilins PilV, PilW and PilX to the surface pili. Stabilizes assembled pilus fibers likely by antagonizing retraction mediated by PilT. Calcium-binding and calcium release by PilY1 seem to be essential for twitching motility and for regulation of pilus retraction dynamics of PilT. The chain is Type IV pilus biogenesis factor PilY1 from Pseudomonas aeruginosa (strain ATCC 15692 / DSM 22644 / CIP 104116 / JCM 14847 / LMG 12228 / 1C / PRS 101 / PAO1).